A 503-amino-acid chain; its full sequence is Cardiolipin synthase (503 aa).

Transmembrane regions (helical) follow at residues 5–25 (LNVL…RSFW), 29–49 (IVGA…IVIF), and 59–79 (LTWL…YLMF). PLD phosphodiesterase domains lie at 238–265 (INYR…GDEY) and 416–443 (TRGF…DMRS). Active-site residues include histidine 243, lysine 245, aspartate 250, histidine 421, lysine 423, and aspartate 428.

The protein belongs to the phospholipase D family. Cardiolipin synthase subfamily.

The protein localises to the cell membrane. It carries out the reaction 2 a 1,2-diacyl-sn-glycero-3-phospho-(1'-sn-glycerol) = a cardiolipin + glycerol. Catalyzes the reversible phosphatidyl group transfer from one phosphatidylglycerol molecule to another to form cardiolipin (CL) (diphosphatidylglycerol) and glycerol. The sequence is that of Cardiolipin synthase (cls) from Halalkalibacterium halodurans (strain ATCC BAA-125 / DSM 18197 / FERM 7344 / JCM 9153 / C-125) (Bacillus halodurans).